Here is a 326-residue protein sequence, read N- to C-terminus: Probable cell division protein WhiA (326 aa).

The H-T-H motif DNA-binding region spans 275 to 308; the sequence is SLDELGRLADPPMTKDAIAGRIRRLLAMADKRAL.

Belongs to the WhiA family.

Its function is as follows. Involved in cell division and chromosome segregation. The chain is Probable cell division protein WhiA from Paenarthrobacter aurescens (strain TC1).